The sequence spans 49 residues: Osteocalcin (49 aa).

Positions 1–47 (YLYQWLGAPAPYPDPLEPKREVCELNPDCDELADHIGFQEAYRRFYG) constitute a Gla domain. The residue at position 9 (proline 9) is a 4-hydroxyproline. Residues glutamate 17, glutamate 21, glutamate 24, and aspartate 30 each contribute to the Ca(2+) site. Residues glutamate 17, glutamate 21, and glutamate 24 each carry the 4-carboxyglutamate modification. An intrachain disulfide couples cysteine 23 to cysteine 29.

Belongs to the osteocalcin/matrix Gla protein family. Post-translationally, gamma-carboxyglutamate residues are formed by vitamin K dependent carboxylation by GGCX. These residues are essential for the binding of calcium. Decarboxylation promotes the hormone activity.

It localises to the secreted. Its function is as follows. The carboxylated form is one of the main organic components of the bone matrix, which constitutes 1-2% of the total bone protein: it acts as a negative regulator of bone formation and is required to limit bone formation without impairing bone resorption or mineralization. The carboxylated form binds strongly to apatite and calcium. In terms of biological role, the uncarboxylated form acts as a hormone secreted by osteoblasts, which regulates different cellular processes, such as energy metabolism, male fertility and brain development. Regulates of energy metabolism by acting as a hormone favoring pancreatic beta-cell proliferation, insulin secretion and sensitivity and energy expenditure. Uncarboxylated osteocalcin hormone also promotes testosterone production in the testes: acts as a ligand for G protein-coupled receptor GPRC6A at the surface of Leydig cells, initiating a signaling response that promotes the expression of enzymes required for testosterone synthesis in a CREB-dependent manner. Also acts as a regulator of brain development: osteocalcin hormone crosses the blood-brain barrier and acts as a ligand for GPR158 on neurons, initiating a signaling response that prevents neuronal apoptosis in the hippocampus, favors the synthesis of all monoamine neurotransmitters and inhibits that of gamma-aminobutyric acid (GABA). Osteocalcin also crosses the placenta during pregnancy and maternal osteocalcin is required for fetal brain development. This Macaca fascicularis (Crab-eating macaque) protein is Osteocalcin (BGLAP).